A 311-amino-acid polypeptide reads, in one-letter code: Malate dehydrogenase (311 aa).

NAD(+) is bound by residues 7-13 (GAAGGIG) and D34. Substrate-binding residues include R81 and R87. NAD(+)-binding positions include N94 and 117 to 119 (ITN). Substrate contacts are provided by N119 and R153. The active-site Proton acceptor is H177. Position 227 (M227) interacts with NAD(+).

The protein belongs to the LDH/MDH superfamily. MDH type 1 family. Homodimer.

The catalysed reaction is (S)-malate + NAD(+) = oxaloacetate + NADH + H(+). Functionally, catalyzes the reversible oxidation of malate to oxaloacetate. This chain is Malate dehydrogenase, found in Shewanella frigidimarina (strain NCIMB 400).